Here is a 221-residue protein sequence, read N- to C-terminus: Large ribosomal subunit protein bL25 (221 aa).

Residues 192-221 (APRVEKEETEEDTVAPGDVPAENSKDADEE) form a disordered region.

The protein belongs to the bacterial ribosomal protein bL25 family. CTC subfamily. In terms of assembly, part of the 50S ribosomal subunit; part of the 5S rRNA/L5/L18/L25 subcomplex. Contacts the 5S rRNA. Binds to the 5S rRNA independently of L5 and L18.

This is one of the proteins that binds to the 5S RNA in the ribosome where it forms part of the central protuberance. The protein is Large ribosomal subunit protein bL25 of Idiomarina loihiensis (strain ATCC BAA-735 / DSM 15497 / L2-TR).